The sequence spans 655 residues: Sphingomyelin phosphodiesterase 3 (655 aa).

The Cytoplasmic segment spans residues 1–10 (MVLYTTPFPN). An intramembrane region (helical) is located at residues 11-31 (SCLSALHAVSWALIFPCYWLV). Over 32 to 64 (DRLVASFIPTTYEKRQRADDPCYLQLFCTVLFT) the chain is Cytoplasmic. Residues C53 and C59 are each lipidated (S-palmitoyl cysteine). An intramembrane region (helical) is located at residues 65–85 (PVYLALLVAALPFAFLGFIFW). At 86-655 (SPLQSARRPY…LMVSAGEEEA (570 aa)) the chain is on the cytoplasmic side. S178 carries the phosphoserine modification. Disordered stretches follow at residues 209-237 (VEYK…DGSL) and 250-320 (GGRA…SNSK). Positions 211–221 (YKGDGGRHPSD) are enriched in basic and acidic residues. Residue S289 is modified to Phosphoserine. E362 is a binding site for Mg(2+). Residues C395 and C396 are each lipidated (S-palmitoyl cysteine). H639 functions as the Proton acceptor in the catalytic mechanism.

It belongs to the neutral sphingomyelinase family. The cofactor is Mg(2+). Palmitoylated, palmitoylation-deficient proteins are targeted for lysosomal degradation. In brain sections, it is restricted to neurons and especially prominent in large cells, including Purkinje cells, pyramidal cells, neurons of the dentate gyrus granular layer, and neurons in the pontine nuclei. Also present in the hypothalamic nuclei, neurons in the piriform cortex, and nuclei of the brainstem (at protein level). Mainly expressed in brain and jejunum. Weakly or not expressed in heart, spleen, lung, liver, kidney and testis.

Its subcellular location is the golgi apparatus membrane. The protein localises to the cell membrane. It catalyses the reaction a sphingomyelin + H2O = phosphocholine + an N-acylsphing-4-enine + H(+). The catalysed reaction is N-(15Z-tetracosenoyl)sphing-4-enine-1-phosphocholine + H2O = N-(15Z-tetracosenoyl)-sphing-4-enine + phosphocholine + H(+). The enzyme catalyses N-(tetracosanoyl)-sphing-4-enine-1-phosphocholine + H2O = N-tetracosanoyl-sphing-4-enine + phosphocholine + H(+). It carries out the reaction an N-(acyl)-sphingosylphosphocholine + H2O = an N-acyl-sphingoid base + phosphocholine + H(+). It catalyses the reaction 1-hexadecanoyl-sn-glycero-3-phosphocholine + H2O = 1-hexadecanoyl-sn-glycerol + phosphocholine + H(+). The catalysed reaction is 1-O-octadecyl-sn-glycero-3-phosphocholine + H2O = 1-O-octadecyl-sn-glycerol + phosphocholine + H(+). The enzyme catalyses a sphingosylphosphocholine + H2O = a sphingoid base + phosphocholine + H(+). It carries out the reaction N-(hexadecanoyl)-sphing-4-enine-1-phosphocholine + H2O = N-hexadecanoylsphing-4-enine + phosphocholine + H(+). Its pathway is lipid metabolism; sphingolipid metabolism. With respect to regulation, inhibited by nSMase inhibitor GW4869. Binding of anionic phospholipids (APLs) such as phosphatidylserine (PS) and phosphatidic acid (PA) increases enzymatic activity. In terms of biological role, catalyzes the hydrolysis of sphingomyelin to form ceramide and phosphocholine. Ceramide mediates numerous cellular functions, such as apoptosis and growth arrest, and is capable of regulating these 2 cellular events independently. Also hydrolyzes sphingosylphosphocholine. Binds to anionic phospholipids (APLs) such as phosphatidylserine (PS) and phosphatidic acid (PA) that modulate enzymatic activity and subcellular location. Regulates the cell cycle by acting as a growth suppressor in confluent cells. Acts as a regulator of postnatal development and participates in bone and dentin mineralization. May be involved in IL-1-beta-induced JNK activation in hepatocytes. May act as a mediator in transcriptional regulation of NOS2/iNOS via the NF-kappa-B activation under inflammatory conditions. This chain is Sphingomyelin phosphodiesterase 3, found in Rattus norvegicus (Rat).